Here is a 113-residue protein sequence, read N- to C-terminus: Ribosome-binding factor A (113 aa).

The protein belongs to the RbfA family. In terms of assembly, monomer. Binds 30S ribosomal subunits, but not 50S ribosomal subunits or 70S ribosomes.

Its subcellular location is the cytoplasm. Its function is as follows. One of several proteins that assist in the late maturation steps of the functional core of the 30S ribosomal subunit. Associates with free 30S ribosomal subunits (but not with 30S subunits that are part of 70S ribosomes or polysomes). Required for efficient processing of 16S rRNA. May interact with the 5'-terminal helix region of 16S rRNA. The sequence is that of Ribosome-binding factor A from Lactococcus lactis subsp. cremoris (Streptococcus cremoris).